Consider the following 347-residue polypeptide: Merozoite surface protein P12 (347 aa).

The segment at residues 1 to 23 is a signal peptide (or 25); the sequence is MIKLSKKYCLGISFVLYILLSVC. 6-Cys domains are found at residues 27 to 172 and 175 to 305; these read KNLT…IPSL and KVKG…ISSS. A glycan (N-linked (GlcNAc...) asparagine) is linked at Asn-28. Cystine bridges form between Cys-31–Cys-53, Cys-67–Cys-138, and Cys-81–Cys-136. 6 N-linked (GlcNAc...) asparagine glycosylation sites follow: Asn-147, Asn-200, Asn-228, Asn-242, Asn-265, and Asn-322. Cystine bridges form between Cys-179/Cys-211, Cys-225/Cys-286, and Cys-236/Cys-284. Residue Asn-322 is the site of GPI-anchor amidated asparagine attachment. Residues 323–347 constitute a propeptide, removed in mature form; the sequence is SSFLTLSSYCAFITFIITSFLSFIL.

As to quaternary structure, heterodimer; heterodimerizes with PF41. May form an antiparallel heterodimer with PF41.

It is found in the cell surface. It localises to the cell membrane. This is Merozoite surface protein P12 (PF12) from Plasmodium falciparum.